We begin with the raw amino-acid sequence, 101 residues long: Protein Tat (101 aa).

The disordered stretch occupies residues 1-20 (MEPVDPSLEPWKHPGSQPKT). Residues 1 to 24 (MEPVDPSLEPWKHPGSQPKTACTN) are interaction with human CREBBP. The segment at 1–48 (MEPVDPSLEPWKHPGSQPKTACTNCYCKKCCLHCQVCFTTKGLGISYG) is transactivation. Cys-22, Cys-25, and Cys-27 together coordinate Zn(2+). Residues 22–37 (CTNCYCKKCCLHCQVC) are cysteine-rich. Lys-28 bears the N6-acetyllysine; by host PCAF mark. Zn(2+)-binding residues include Cys-30, His-33, Cys-34, and Cys-37. The interval 38-48 (FTTKGLGISYG) is core. The interval 45 to 101 (ISYGRKKRRQRRRPPQDSQTHQVSLPKQPSSQQRGDPTGPKESKKKVERETETDPDN) is disordered. Residues 48 to 57 (GRKKRRQRRR) are compositionally biased toward basic residues. The Nuclear localization signal, RNA-binding (TAR), and protein transduction signature appears at 49 to 57 (RKKRRQRRR). The interaction with the host capping enzyme RNGTT stretch occupies residues 49–86 (RKKRRQRRRPPQDSQTHQVSLPKQPSSQQRGDPTGPKE). 2 positions are modified to N6-acetyllysine; by host EP300 and GCN5L2: Lys-50 and Lys-51. Residues Arg-52 and Arg-53 each carry the asymmetric dimethylarginine; by host PRMT6 modification. Polar residues predominate over residues 61-79 (DSQTHQVSLPKQPSSQQRG). Lys-71 participates in a covalent cross-link: Glycyl lysine isopeptide (Lys-Gly) (interchain with G-Cter in ubiquitin). The short motif at 78–80 (RGD) is the Cell attachment site element. Basic and acidic residues predominate over residues 83-101 (GPKESKKKVERETETDPDN).

This sequence belongs to the lentiviruses Tat family. In terms of assembly, interacts with host CCNT1. Associates with the P-TEFb complex composed at least of Tat, P-TEFb (CDK9 and CCNT1), TAR RNA, RNA Pol II. Recruits the HATs CREBBP, TAF1/TFIID, EP300, PCAF and GCN5L2. Interacts with host KAT5/Tip60; this interaction targets the latter to degradation. Interacts with the host deacetylase SIRT1. Interacts with host capping enzyme RNGTT; this interaction stimulates RNGTT. Binds to host KDR, and to the host integrins ITGAV/ITGB3 and ITGA5/ITGB1. Interacts with host KPNB1/importin beta-1 without previous binding to KPNA1/importin alpha-1. Interacts with EIF2AK2. Interacts with host nucleosome assembly protein NAP1L1; this interaction may be required for the transport of Tat within the nucleus, since the two proteins interact at the nuclear rim. Interacts with host C1QBP/SF2P32; this interaction involves lysine-acetylated Tat. Interacts with the host chemokine receptors CCR2, CCR3 and CXCR4. Interacts with host DPP4/CD26; this interaction may trigger an anti-proliferative effect. Interacts with host LDLR. Interacts with the host extracellular matrix metalloproteinase MMP1. Interacts with host PRMT6; this interaction mediates Tat's methylation. Interacts with, and is ubiquitinated by MDM2/Hdm2. Interacts with host PSMC3 and HTATIP2. Interacts with STAB1; this interaction may overcome SATB1-mediated repression of IL2 and IL2RA (interleukin) in T cells by binding to the same domain than HDAC1. Interacts (when acetylated) with human CDK13, thereby increasing HIV-1 mRNA splicing and promoting the production of the doubly spliced HIV-1 protein Nef. Interacts with host TBP; this interaction modulates the activity of transcriptional pre-initiation complex. Interacts with host RELA. Interacts with host PLSCR1; this interaction negatively regulates Tat transactivation activity by altering its subcellular distribution. Asymmetrical arginine methylation by host PRMT6 seems to diminish the transactivation capacity of Tat and affects the interaction with host CCNT1. In terms of processing, acetylation by EP300, CREBBP, GCN5L2/GCN5 and PCAF regulates the transactivation activity of Tat. EP300-mediated acetylation of Lys-50 promotes dissociation of Tat from the TAR RNA through the competitive binding to PCAF's bromodomain. In addition, the non-acetylated Tat's N-terminus can also interact with PCAF. PCAF-mediated acetylation of Lys-28 enhances Tat's binding to CCNT1. Lys-50 is deacetylated by SIRT1. Post-translationally, polyubiquitination by host MDM2 does not target Tat to degradation, but activates its transactivation function and fosters interaction with CCNT1 and TAR RNA. Phosphorylated by EIF2AK2 on serine and threonine residues adjacent to the basic region important for TAR RNA binding and function. Phosphorylation of Tat by EIF2AK2 is dependent on the prior activation of EIF2AK2 by dsRNA.

It is found in the host nucleus. The protein localises to the host nucleolus. Its subcellular location is the host cytoplasm. The protein resides in the secreted. Transcriptional activator that increases RNA Pol II processivity, thereby increasing the level of full-length viral transcripts. Recognizes a hairpin structure at the 5'-LTR of the nascent viral mRNAs referred to as the transactivation responsive RNA element (TAR) and recruits the cyclin T1-CDK9 complex (P-TEFb complex) that will in turn hyperphosphorylate the RNA polymerase II to allow efficient elongation. The CDK9 component of P-TEFb and other Tat-activated kinases hyperphosphorylate the C-terminus of RNA Pol II that becomes stabilized and much more processive. Other factors such as HTATSF1/Tat-SF1, SUPT5H/SPT5, and HTATIP2 are also important for Tat's function. Besides its effect on RNA Pol II processivity, Tat induces chromatin remodeling of proviral genes by recruiting the histone acetyltransferases (HATs) CREBBP, EP300 and PCAF to the chromatin. This also contributes to the increase in proviral transcription rate, especially when the provirus integrates in transcriptionally silent region of the host genome. To ensure maximal activation of the LTR, Tat mediates nuclear translocation of NF-kappa-B by interacting with host RELA. Through its interaction with host TBP, Tat may also modulate transcription initiation. Tat can reactivate a latently infected cell by penetrating in it and transactivating its LTR promoter. In the cytoplasm, Tat is thought to act as a translational activator of HIV-1 mRNAs. In terms of biological role, extracellular circulating Tat can be endocytosed by surrounding uninfected cells via the binding to several surface receptors such as CD26, CXCR4, heparan sulfate proteoglycans (HSPG) or LDLR. Neurons are rarely infected, but they internalize Tat via their LDLR. Through its interaction with nuclear HATs, Tat is potentially able to control the acetylation-dependent cellular gene expression. Modulates the expression of many cellular genes involved in cell survival, proliferation or in coding for cytokines or cytokine receptors. Tat plays a role in T-cell and neurons apoptosis. Tat induced neurotoxicity and apoptosis probably contribute to neuroAIDS. Circulating Tat also acts as a chemokine-like and/or growth factor-like molecule that binds to specific receptors on the surface of the cells, affecting many cellular pathways. In the vascular system, Tat binds to ITGAV/ITGB3 and ITGA5/ITGB1 integrins dimers at the surface of endothelial cells and competes with bFGF for heparin-binding sites, leading to an excess of soluble bFGF. This Homo sapiens (Human) protein is Protein Tat.